The primary structure comprises 392 residues: MTLLGTALRPAATRVMLLGSGELGKEVAIECQRLGVEVIAVDRYADAPAMHVAHRSHVINMLDGDALRRVVELEKPHYIVPEIEAIATDMLIQLEEEGLNVVPCARATKLTMNREGIRRLAAEELQLPTSTYRFSDSESLFREAVAAIGYPCIVKPVMSSSGKGQTFIRSAEQLAQAWEYAQQGGRAGAGRVIVEGVVKFDFEITLLTVSAVDGVHFCAPVGHRQEDGDYRESWQPQQMSPLALERAQEIARKVVLALGGYGLFGVELFVCGDEVIFSEVSPRPHDTGMVTLISQDLSEFALHVRAFLGLPVGGIRQYGPAASAVILPQLTSQNVTFDNVQNAVGADLQIRLFGKPEIDGSRRLGVALATAESVVDAIERAKHAAGQVKVQG.

N(1)-(5-phospho-beta-D-ribosyl)glycinamide contacts are provided by residues 22 to 23 (EL) and E82. Residues R114, K155, 160 to 165 (SSGKGQ), 195 to 198 (EGVV), and E203 contribute to the ATP site. In terms of domain architecture, ATP-grasp spans 119–308 (RLAAEELQLP…EFALHVRAFL (190 aa)). Positions 267 and 279 each coordinate Mg(2+). N(1)-(5-phospho-beta-D-ribosyl)glycinamide is bound by residues D286, K355, and 362–363 (RR).

It belongs to the PurK/PurT family. Homodimer.

It carries out the reaction N(1)-(5-phospho-beta-D-ribosyl)glycinamide + formate + ATP = N(2)-formyl-N(1)-(5-phospho-beta-D-ribosyl)glycinamide + ADP + phosphate + H(+). Its pathway is purine metabolism; IMP biosynthesis via de novo pathway; N(2)-formyl-N(1)-(5-phospho-D-ribosyl)glycinamide from N(1)-(5-phospho-D-ribosyl)glycinamide (formate route): step 1/1. Functionally, involved in the de novo purine biosynthesis. Catalyzes the transfer of formate to 5-phospho-ribosyl-glycinamide (GAR), producing 5-phospho-ribosyl-N-formylglycinamide (FGAR). Formate is provided by PurU via hydrolysis of 10-formyl-tetrahydrofolate. The sequence is that of Formate-dependent phosphoribosylglycinamide formyltransferase from Shigella dysenteriae serotype 1 (strain Sd197).